A 168-amino-acid polypeptide reads, in one-letter code: 6,7-dimethyl-8-ribityllumazine synthase (168 aa).

5-amino-6-(D-ribitylamino)uracil is bound by residues F24, 58–60 (ALE), and 82–84 (AVI). (2S)-2-hydroxy-3-oxobutyl phosphate is bound at residue 87–88 (ET). Residue H90 is the Proton donor of the active site. Residue N115 coordinates 5-amino-6-(D-ribitylamino)uracil. R129 serves as a coordination point for (2S)-2-hydroxy-3-oxobutyl phosphate.

The protein belongs to the DMRL synthase family.

The enzyme catalyses (2S)-2-hydroxy-3-oxobutyl phosphate + 5-amino-6-(D-ribitylamino)uracil = 6,7-dimethyl-8-(1-D-ribityl)lumazine + phosphate + 2 H2O + H(+). Its pathway is cofactor biosynthesis; riboflavin biosynthesis; riboflavin from 2-hydroxy-3-oxobutyl phosphate and 5-amino-6-(D-ribitylamino)uracil: step 1/2. Its function is as follows. Catalyzes the formation of 6,7-dimethyl-8-ribityllumazine by condensation of 5-amino-6-(D-ribitylamino)uracil with 3,4-dihydroxy-2-butanone 4-phosphate. This is the penultimate step in the biosynthesis of riboflavin. The sequence is that of 6,7-dimethyl-8-ribityllumazine synthase from Paraburkholderia xenovorans (strain LB400).